The sequence spans 492 residues: 3,6-anhydro-alpha-L-galactose dehydrogenase (492 aa).

Residues 160–161 (WN), 184–187 (KPSE), and 237–238 (GS) contribute to the NADP(+) site. Glutamate 259 functions as the Proton acceptor in the catalytic mechanism. Leucine 260 contacts NADP(+). Residue cysteine 293 is the Nucleophile of the active site. Glutamate 394 contributes to the NADP(+) binding site.

It belongs to the aldehyde dehydrogenase family.

It carries out the reaction 3,6-anhydro-alpha-L-galactopyranose + NADP(+) + H2O = 3,6-anhydro-L-galactonate + NADPH + 2 H(+). Its activity is regulated as follows. Significantly inhibited by EDTA. Activity is enhanced by Fe(2+), but is strongly inhibited by Mn(2+), Cu(2+), Zn(2+), Ni(2+) and Co(2+). In terms of biological role, involved in the degradation of 3,6-anhydro-L-galactose, which is the major monomeric sugar of red macroalgae. Catalyzes the oxidation of 3,6-anhydro-L-galactose (AHG) to form 3,6-anhydrogalactonate (AHGA). Shows broad substrate specificity, with maximum activity toward AHG. The enzyme activities toward D-fructose, D-galactose and D-ribose are between 40% and 50% of the maximum, but those toward L-rhamnose, L-glyceraldehyde, D-glyceraldehyde, L-fucose and D-glucose are much lower. The polypeptide is 3,6-anhydro-alpha-L-galactose dehydrogenase (Streptomyces coelicolor (strain ATCC BAA-471 / A3(2) / M145)).